We begin with the raw amino-acid sequence, 1025 residues long: DNA polymerase (1025 aa).

This sequence belongs to the DNA polymerase type-B family.

The enzyme catalyses DNA(n) + a 2'-deoxyribonucleoside 5'-triphosphate = DNA(n+1) + diphosphate. Functionally, replicates the viral genome. Host DNA polymerases cannot substitute for the viral enzyme in this process. The polypeptide is DNA polymerase (Noctuidae (owlet moths)).